The following is a 298-amino-acid chain: Ribosomal protein L11 methyltransferase (298 aa).

S-adenosyl-L-methionine contacts are provided by T152, G176, D198, and N236.

It belongs to the methyltransferase superfamily. PrmA family.

It localises to the cytoplasm. It carries out the reaction L-lysyl-[protein] + 3 S-adenosyl-L-methionine = N(6),N(6),N(6)-trimethyl-L-lysyl-[protein] + 3 S-adenosyl-L-homocysteine + 3 H(+). In terms of biological role, methylates ribosomal protein L11. The protein is Ribosomal protein L11 methyltransferase of Polaromonas sp. (strain JS666 / ATCC BAA-500).